We begin with the raw amino-acid sequence, 602 residues long: Elongation factor 4 (602 aa).

A tr-type G domain is found at 7-188; sequence ENIRNFSIIA…AIVELIPPPK (182 aa). Residues 19–24 and 135–138 contribute to the GTP site; these read DHGKST and NKID.

It belongs to the TRAFAC class translation factor GTPase superfamily. Classic translation factor GTPase family. LepA subfamily.

It localises to the cell inner membrane. The enzyme catalyses GTP + H2O = GDP + phosphate + H(+). Functionally, required for accurate and efficient protein synthesis under certain stress conditions. May act as a fidelity factor of the translation reaction, by catalyzing a one-codon backward translocation of tRNAs on improperly translocated ribosomes. Back-translocation proceeds from a post-translocation (POST) complex to a pre-translocation (PRE) complex, thus giving elongation factor G a second chance to translocate the tRNAs correctly. Binds to ribosomes in a GTP-dependent manner. This Chlamydia abortus (strain DSM 27085 / S26/3) (Chlamydophila abortus) protein is Elongation factor 4.